The primary structure comprises 259 residues: Glucosamine-6-phosphate deaminase (259 aa).

The active-site Proton acceptor; for enolization step is the Asp-66. Asp-135 acts as the For ring-opening step in catalysis. His-137 (proton acceptor; for ring-opening step) is an active-site residue. Glu-142 functions as the For ring-opening step in the catalytic mechanism.

Belongs to the glucosamine/galactosamine-6-phosphate isomerase family. NagB subfamily.

It catalyses the reaction alpha-D-glucosamine 6-phosphate + H2O = beta-D-fructose 6-phosphate + NH4(+). Its pathway is amino-sugar metabolism; N-acetylneuraminate degradation; D-fructose 6-phosphate from N-acetylneuraminate: step 5/5. In terms of biological role, catalyzes the reversible isomerization-deamination of glucosamine 6-phosphate (GlcN6P) to form fructose 6-phosphate (Fru6P) and ammonium ion. This Rhodococcus opacus (strain B4) protein is Glucosamine-6-phosphate deaminase.